Consider the following 465-residue polypeptide: Protein hedgehog (465 aa).

A lipid anchor (N-palmitoyl cysteine) is attached at C79. E143, E144, D149, T179, E180, D183, and D185 together coordinate Ca(2+). G251 is lipidated: Cholesterol glycine ester.

This sequence belongs to the hedgehog family. In terms of assembly, interacts with shf. In terms of processing, the C-terminal part of the hedgehog protein precursor displays an autoproteolysis activity that results in the cleavage of the full-length protein into two parts (N-product and C-product). In addition, the C-terminal part displays a cholesterol transferase activity that results by the covalent attachment of a cholesterol moiety to the C-terminal of the newly generated N-product. The N-product is the active species in both local and long-range signaling, whereas the C-product has no signaling activity. Cholesterylation is required for N-product targeting to lipid rafts and multimerization. Post-translationally, N-palmitoylation by Rasp of the hedgehog N-product, within the secretory pathway, is required for the embryonic and larval patterning activities of the hedgehog signal.

It localises to the nucleus. The protein resides in the cytoplasm. The protein localises to the cell membrane. The enzyme catalyses glycyl-L-cysteinyl-[protein] + cholesterol + H(+) = [protein]-C-terminal glycyl cholesterol ester + N-terminal L-cysteinyl-[protein]. The C-terminal part of the hedgehog protein precursor displays an autoproteolysis activity that results in the cleavage of the full-length protein into two parts (N-product and C-product). In addition, the C-terminal part displays a cholesterol transferase activity that results by the covalent attachment of a cholesterol moiety to the C-terminal of the newly generated N-product. Once cleaved, the C-product has no signaling activity and diffuses from the cell. Its function is as follows. The dually lipidated hedgehog protein N-product is a morphogen which is essential for a variety of patterning events during development. Establishes the anterior-posterior axis of the embryonic segments and patterns the larval imaginal disks. Binds to the patched (ptc) receptor, which functions in association with smoothened (smo), to activate the transcription of target genes wingless (wg), decapentaplegic (dpp) and ptc. In the absence of hh, ptc represses the constitutive signaling activity of smo through fused (fu). Essential component of a signaling pathway which regulates the Duox-dependent gut immune response to bacterial uracil; required to activate Cad99C-dependent endosome formation, norpA-dependent Ca2+ mobilization and p38 MAPK, which are essential steps in the Duox-dependent production of reactive oxygen species (ROS) in response to intestinal bacterial infection. During photoreceptor differentiation, it up-regulates transcription of Ubr3, which in turn promotes the hh-signaling pathway by mediating the ubiquitination and degradation of cos. The chain is Protein hedgehog from Drosophila yakuba (Fruit fly).